The chain runs to 122 residues: Large ribosomal subunit protein uL18 (122 aa).

Over residues 1–22 (MDKNKKLQSKRLRRRRHVRNKL) the composition is skewed to basic residues. The interval 1-25 (MDKNKKLQSKRLRRRRHVRNKLRGS) is disordered.

The protein belongs to the universal ribosomal protein uL18 family. Part of the 50S ribosomal subunit; part of the 5S rRNA/L5/L18/L25 subcomplex. Contacts the 5S and 23S rRNAs.

Functionally, this is one of the proteins that bind and probably mediate the attachment of the 5S RNA into the large ribosomal subunit, where it forms part of the central protuberance. This Rhodopirellula baltica (strain DSM 10527 / NCIMB 13988 / SH1) protein is Large ribosomal subunit protein uL18.